A 356-amino-acid polypeptide reads, in one-letter code: S-adenosylmethionine:tRNA ribosyltransferase-isomerase (356 aa).

This sequence belongs to the QueA family. As to quaternary structure, monomer.

The protein localises to the cytoplasm. It catalyses the reaction 7-aminomethyl-7-carbaguanosine(34) in tRNA + S-adenosyl-L-methionine = epoxyqueuosine(34) in tRNA + adenine + L-methionine + 2 H(+). The protein operates within tRNA modification; tRNA-queuosine biosynthesis. Its function is as follows. Transfers and isomerizes the ribose moiety from AdoMet to the 7-aminomethyl group of 7-deazaguanine (preQ1-tRNA) to give epoxyqueuosine (oQ-tRNA). The polypeptide is S-adenosylmethionine:tRNA ribosyltransferase-isomerase (Salmonella arizonae (strain ATCC BAA-731 / CDC346-86 / RSK2980)).